The sequence spans 254 residues: Chymotrypsin-like serine proteinase (254 aa).

The first 18 residues, 1–18 (MNALLNILLCTLAATALA), serve as a signal peptide directing secretion. Positions 19 to 23 (EISPN) are cleaved as a propeptide — activation peptide. Positions 24–254 (IVGGSNAAAG…SSFYNWVQTQ (231 aa)) constitute a Peptidase S1 domain. Cysteine 53 and cysteine 69 form a disulfide bridge. Active-site charge relay system residues include histidine 68 and aspartate 117. Intrachain disulfides connect cysteine 146/cysteine 218, cysteine 181/cysteine 199, and cysteine 208/cysteine 233. Residue serine 212 is the Charge relay system of the active site.

The protein belongs to the peptidase S1 family. In terms of assembly, monomer. Expressed specifically in the distal quarter of the intestine.

The protein resides in the secreted. The protein localises to the extracellular space. Activated by an autocatalytic mechanism. In terms of biological role, specificity similar to chymotrypsin. In Haliotis rufescens (California red abalone), this protein is Chymotrypsin-like serine proteinase.